Reading from the N-terminus, the 476-residue chain is Probable protein S-acyltransferase 5 (476 aa).

The segment covering 1–11 (MLDLQPSDRRH) has biased composition (basic and acidic residues). A disordered region spans residues 1 to 21 (MLDLQPSDRRHGAPSSSGGVS). The next 2 helical transmembrane spans lie at 53-73 (SILI…IFVG) and 85-105 (GVSV…FLLL). The segment at 119-138 (YPPEPESNEGNGEPRLAHTP) is disordered. The 51-residue stretch at 158 to 208 (KYCDTCMLYRPPRASHCSICNNCVEKFDHHCPWLGQCIGLRNYRFYFMFVL) folds into the DHHC domain. The S-palmitoyl cysteine intermediate role is filled by cysteine 188. Transmembrane regions (helical) follow at residues 209–223 (CSTL…FCWI) and 246–266 (SIAL…LTCF). Disordered stretches follow at residues 320–340 (SKEP…PSLQ) and 373–454 (VASR…ASRD). Serine 336 is modified (phosphoserine). The span at 387 to 412 (SEGRGIMHSRESSRGRGIMHSRESSR) shows a compositional bias: basic and acidic residues. Residue serine 418 is modified to Phosphoserine. A compositionally biased stretch (basic and acidic residues) spans 425 to 441 (VNEDLRTRDESVSRVGE).

Belongs to the DHHC palmitoyltransferase family.

The protein localises to the cell membrane. It carries out the reaction L-cysteinyl-[protein] + hexadecanoyl-CoA = S-hexadecanoyl-L-cysteinyl-[protein] + CoA. In terms of biological role, palmitoyl acyltransferase. In Arabidopsis thaliana (Mouse-ear cress), this protein is Probable protein S-acyltransferase 5 (PAT05).